The sequence spans 405 residues: Succinyl-CoA--L-malate CoA-transferase beta subunit (405 aa).

The active-site Nucleophile is aspartate 175.

It belongs to the CoA-transferase III family. Forms a large complex composed of six heterodimers (alpha, beta).

It carries out the reaction succinyl-CoA + (S)-malate = (S)-malyl-CoA + succinate. The catalysed reaction is (3S)-citramalate + succinyl-CoA = (3S)-citramalyl-CoA + succinate. In terms of biological role, involved in the 3-hydroxypropionate cycle used for autotrophic carbon dioxide fixation. Catalyzes the transfer of CoA moiety from succinyl-CoA to L-malate to yield L-malyl-CoA. The chain is Succinyl-CoA--L-malate CoA-transferase beta subunit (smtB) from Chloroflexus aurantiacus (strain ATCC 29366 / DSM 635 / J-10-fl).